Here is a 77-residue protein sequence, read N- to C-terminus: Blood-induced peptide 1 (77 aa).

Residues 38-71 are a coiled coil; that stretch reads EDFLHQENSELKKSLKNLEMENEKLKNILKTDYN.

In terms of biological role, plays an important role in survival in host blood through increasing tolerance to stresses such as heat, salt, or cycloheximide, which is essential for virulence. This is Blood-induced peptide 1 from Candida albicans (strain SC5314 / ATCC MYA-2876) (Yeast).